A 393-amino-acid polypeptide reads, in one-letter code: Digeranylgeranylglycerophospholipid reductase (393 aa).

Residues Ala13, Asp32, Cys43, Ala44, Gly46, Arg95, Val119, Asp274, and Gly286 each coordinate FAD. Arg327 and Gly363 together coordinate a 2,3-bis-O-(geranylgeranyl)-sn-glycerol 1-phospholipid.

The protein belongs to the geranylgeranyl reductase family. DGGGPL reductase subfamily. FAD serves as cofactor.

It carries out the reaction a 2,3-bis-O-phytanyl-sn-glycerol 1-phospholipid + 8 A = a 2,3-bis-O-(geranylgeranyl)-sn-glycerol 1-phospholipid + 8 AH2. The catalysed reaction is 2,3-bis-O-(phytanyl)-sn-glycerol 1-phosphate + 8 A = 2,3-bis-O-(geranylgeranyl)-sn-glycerol 1-phosphate + 8 AH2. It catalyses the reaction CDP-2,3-bis-O-(geranylgeranyl)-sn-glycerol + 8 AH2 = CDP-2,3-bis-O-(phytanyl)-sn-glycerol + 8 A. The enzyme catalyses archaetidylserine + 8 AH2 = 2,3-bis-O-phytanyl-sn-glycero-3-phospho-L-serine + 8 A. The protein operates within membrane lipid metabolism; glycerophospholipid metabolism. In terms of biological role, is involved in the reduction of 2,3-digeranylgeranylglycerophospholipids (unsaturated archaeols) into 2,3-diphytanylglycerophospholipids (saturated archaeols) in the biosynthesis of archaeal membrane lipids. Catalyzes the formation of archaetidic acid (2,3-di-O-phytanyl-sn-glyceryl phosphate) from 2,3-di-O-geranylgeranylglyceryl phosphate (DGGGP) via the hydrogenation of each double bond of the isoprenoid chains. Is also probably able to reduce double bonds of geranyl groups in CDP-2,3-bis-O-(geranylgeranyl)-sn-glycerol and archaetidylserine, thus acting at various stages in the biosynthesis of archaeal membrane lipids. This is Digeranylgeranylglycerophospholipid reductase from Pyrococcus horikoshii (strain ATCC 700860 / DSM 12428 / JCM 9974 / NBRC 100139 / OT-3).